Here is a 205-residue protein sequence, read N- to C-terminus: ATP-dependent Clp protease proteolytic subunit (205 aa).

Ser107 functions as the Nucleophile in the catalytic mechanism. Residue His132 is part of the active site.

This sequence belongs to the peptidase S14 family. Fourteen ClpP subunits assemble into 2 heptameric rings which stack back to back to give a disk-like structure with a central cavity, resembling the structure of eukaryotic proteasomes.

It localises to the cytoplasm. It catalyses the reaction Hydrolysis of proteins to small peptides in the presence of ATP and magnesium. alpha-casein is the usual test substrate. In the absence of ATP, only oligopeptides shorter than five residues are hydrolyzed (such as succinyl-Leu-Tyr-|-NHMec, and Leu-Tyr-Leu-|-Tyr-Trp, in which cleavage of the -Tyr-|-Leu- and -Tyr-|-Trp bonds also occurs).. In terms of biological role, cleaves peptides in various proteins in a process that requires ATP hydrolysis. Has a chymotrypsin-like activity. Plays a major role in the degradation of misfolded proteins. This Pseudoalteromonas translucida (strain TAC 125) protein is ATP-dependent Clp protease proteolytic subunit.